A 199-amino-acid chain; its full sequence is Inner membrane protein E199L (199 aa).

N-linked (GlcNAc...) asparagine; by host glycosylation is present at asparagine 131. Residues 150-170 (INVMNHPFLTLILIILILVII) form a helical membrane-spanning segment.

Belongs to the asfivirus E199L family. In terms of assembly, interacts with host PYCR2; this interaction results in autophagy activation. In terms of processing, contains intramolecular disulfide bonds.

It is found in the virion membrane. The protein resides in the host membrane. In terms of biological role, essential for viral fusion with host endosomal membrane and core release. Not required for virus morphogenesis and egress. Induces complete autophagy through the interaction with and down-regulation of host PYCR2. This is Inner membrane protein E199L from African swine fever virus (isolate Tick/Malawi/Lil 20-1/1983) (ASFV).